The primary structure comprises 108 residues: UPF0145 protein HDEF_1024 (108 aa).

This sequence belongs to the UPF0145 family.

This chain is UPF0145 protein HDEF_1024, found in Hamiltonella defensa subsp. Acyrthosiphon pisum (strain 5AT).